The following is a 258-amino-acid chain: Indole-3-glycerol phosphate synthase (258 aa).

It belongs to the TrpC family.

It catalyses the reaction 1-(2-carboxyphenylamino)-1-deoxy-D-ribulose 5-phosphate + H(+) = (1S,2R)-1-C-(indol-3-yl)glycerol 3-phosphate + CO2 + H2O. It participates in amino-acid biosynthesis; L-tryptophan biosynthesis; L-tryptophan from chorismate: step 4/5. The protein is Indole-3-glycerol phosphate synthase of Chlorobium phaeovibrioides (strain DSM 265 / 1930) (Prosthecochloris vibrioformis (strain DSM 265)).